The following is a 336-amino-acid chain: Ketol-acid reductoisomerase (NADP(+)) 1 (336 aa).

The region spanning 2 to 181 is the KARI N-terminal Rossmann domain; it reads AKVYYEKDVT…GATRAGVLET (180 aa). Residues 25–28, arginine 48, serine 52, and 82–85 contribute to the NADP(+) site; these read YGSQ and DELQ. Residue histidine 107 is part of the active site. Residue glycine 133 coordinates NADP(+). Residues 182 to 327 enclose the KARI C-terminal knotted domain; that stretch reads TFKEETETDL…RKLREMMPFV (146 aa). Positions 190, 194, 226, and 230 each coordinate Mg(2+). Serine 251 contacts substrate.

The protein belongs to the ketol-acid reductoisomerase family. Mg(2+) serves as cofactor.

The enzyme catalyses (2R)-2,3-dihydroxy-3-methylbutanoate + NADP(+) = (2S)-2-acetolactate + NADPH + H(+). It carries out the reaction (2R,3R)-2,3-dihydroxy-3-methylpentanoate + NADP(+) = (S)-2-ethyl-2-hydroxy-3-oxobutanoate + NADPH + H(+). Its pathway is amino-acid biosynthesis; L-isoleucine biosynthesis; L-isoleucine from 2-oxobutanoate: step 2/4. The protein operates within amino-acid biosynthesis; L-valine biosynthesis; L-valine from pyruvate: step 2/4. Functionally, involved in the biosynthesis of branched-chain amino acids (BCAA). Catalyzes an alkyl-migration followed by a ketol-acid reduction of (S)-2-acetolactate (S2AL) to yield (R)-2,3-dihydroxy-isovalerate. In the isomerase reaction, S2AL is rearranged via a Mg-dependent methyl migration to produce 3-hydroxy-3-methyl-2-ketobutyrate (HMKB). In the reductase reaction, this 2-ketoacid undergoes a metal-dependent reduction by NADPH to yield (R)-2,3-dihydroxy-isovalerate. This is Ketol-acid reductoisomerase (NADP(+)) 1 from Bacillus cereus (strain ATCC 10987 / NRS 248).